The following is a 315-amino-acid chain: Protein OPG185 (315 aa).

Positions 1–16 (MARLPILLLLISLVYS) are cleaved as a signal peptide. The Ig-like V-type domain maps to 17–121 (TPSPQTSKKI…NDTDKVDYEE (105 aa)). The Virion surface portion of the chain corresponds to 17–279 (TPSPQTSKKI…SNYKTKDFVE (263 aa)). A disulfide bridge connects residues C34 and C103. 4 N-linked (GlcNAc...) asparagine; by host glycosylation sites follow: N37, N69, N112, and N161. The span at 192–202 (INTVSASSGES) shows a compositional bias: polar residues. The disordered stretch occupies residues 192–214 (INTVSASSGESTTDETPEPITDK). N-linked (GlcNAc...) asparagine; by host glycosylation occurs at N254. The helical transmembrane segment at 280–303 (IFGITALIILSAVAIFCITYYIYN) threads the bilayer. The Intravirion portion of the chain corresponds to 304–315 (KRSRKYKTENKV).

It belongs to the orthopoxvirus OPG185 family. Heterodimerizes with OPG040. The heterodimer OPG185-OPG040 interacts with components of the entry fusion complex OPG143 and OPG094. Heterodimer with C3/VPC protein; disulfide-linked. In terms of processing, glycosylated; contains phosphate and sulfate-substituted glycans. O-glycosylation is required for hemagglutination and hemadsorption activities of infected cell membranes.

The protein localises to the virion membrane. It localises to the host membrane. Its function is as follows. Prevents cell to cell fusion by interacting with and directing the viral OPG040 protein on the host plasma membrane. The OPG185-OPG040 complex associates with components of the entry fusion complex (EFC) presumably to avoid superinfection and syncytium formation. Via its interaction with C3/VCP protein, protects the infected cell and probably also the extracellular enveloped virus from complement attack. This chain is Protein OPG185 (OPG185), found in Vaccinia virus (strain Tian Tan) (VACV).